The chain runs to 337 residues: Holliday junction branch migration complex subunit RuvB (337 aa).

The segment at 4–185 is large ATPase domain (RuvB-L); it reads ADRLISNSFE…FGITQRLEYY (182 aa). Residues Ile-24, Arg-25, Gly-66, Lys-69, Thr-70, Thr-71, 132 to 134, Arg-175, Tyr-185, and Arg-222 contribute to the ATP site; that span reads EDY. Thr-70 is a binding site for Mg(2+). A small ATPAse domain (RuvB-S) region spans residues 186-256; the sequence is KVDDLKDIVQ…TAKKALDMLD (71 aa). Positions 259-337 are head domain (RuvB-H); it reads SSGFDYMDRK…HFGLDIPEAR (79 aa). The DNA site is built by Arg-314 and Arg-319.

The protein belongs to the RuvB family. As to quaternary structure, homohexamer. Forms an RuvA(8)-RuvB(12)-Holliday junction (HJ) complex. HJ DNA is sandwiched between 2 RuvA tetramers; dsDNA enters through RuvA and exits via RuvB. An RuvB hexamer assembles on each DNA strand where it exits the tetramer. Each RuvB hexamer is contacted by two RuvA subunits (via domain III) on 2 adjacent RuvB subunits; this complex drives branch migration. In the full resolvosome a probable DNA-RuvA(4)-RuvB(12)-RuvC(2) complex forms which resolves the HJ.

It localises to the cytoplasm. The enzyme catalyses ATP + H2O = ADP + phosphate + H(+). The RuvA-RuvB-RuvC complex processes Holliday junction (HJ) DNA during genetic recombination and DNA repair, while the RuvA-RuvB complex plays an important role in the rescue of blocked DNA replication forks via replication fork reversal (RFR). RuvA specifically binds to HJ cruciform DNA, conferring on it an open structure. The RuvB hexamer acts as an ATP-dependent pump, pulling dsDNA into and through the RuvAB complex. RuvB forms 2 homohexamers on either side of HJ DNA bound by 1 or 2 RuvA tetramers; 4 subunits per hexamer contact DNA at a time. Coordinated motions by a converter formed by DNA-disengaged RuvB subunits stimulates ATP hydrolysis and nucleotide exchange. Immobilization of the converter enables RuvB to convert the ATP-contained energy into a lever motion, pulling 2 nucleotides of DNA out of the RuvA tetramer per ATP hydrolyzed, thus driving DNA branch migration. The RuvB motors rotate together with the DNA substrate, which together with the progressing nucleotide cycle form the mechanistic basis for DNA recombination by continuous HJ branch migration. Branch migration allows RuvC to scan DNA until it finds its consensus sequence, where it cleaves and resolves cruciform DNA. This chain is Holliday junction branch migration complex subunit RuvB, found in Photobacterium profundum (strain SS9).